The following is a 199-amino-acid chain: UPF0329 protein ECU01_0120/ECU01_1490/ECU08_0050 (199 aa).

It belongs to the UPF0329 family.

This chain is UPF0329 protein ECU01_0120/ECU01_1490/ECU08_0050, found in Encephalitozoon cuniculi (strain GB-M1) (Microsporidian parasite).